The primary structure comprises 226 residues: ATP synthase F(0) complex subunit a (226 aa).

6 consecutive transmembrane segments (helical) span residues 6-26, 68-88, 97-117, 138-158, 164-184, and 189-209; these read FASF…IIMF, WSLM…LGLL, QLSM…ITGF, IPML…ALAV, ITAG…LTSI, and AILT…VALI.

Belongs to the ATPase A chain family. Component of the ATP synthase complex composed at least of ATP5F1A/subunit alpha, ATP5F1B/subunit beta, ATP5MC1/subunit c (homooctomer), MT-ATP6/subunit a, MT-ATP8/subunit 8, ATP5ME/subunit e, ATP5MF/subunit f, ATP5MG/subunit g, ATP5MK/subunit k, ATP5MJ/subunit j, ATP5F1C/subunit gamma, ATP5F1D/subunit delta, ATP5F1E/subunit epsilon, ATP5PF/subunit F6, ATP5PB/subunit b, ATP5PD/subunit d, ATP5PO/subunit OSCP. ATP synthase complex consists of a soluble F(1) head domain (subunits alpha(3) and beta(3)) - the catalytic core - and a membrane F(0) domain - the membrane proton channel (subunits c, a, 8, e, f, g, k and j). These two domains are linked by a central stalk (subunits gamma, delta, and epsilon) rotating inside the F1 region and a stationary peripheral stalk (subunits F6, b, d, and OSCP). Interacts with DNAJC30; interaction is direct.

The protein localises to the mitochondrion inner membrane. The enzyme catalyses H(+)(in) = H(+)(out). Its function is as follows. Subunit a, of the mitochondrial membrane ATP synthase complex (F(1)F(0) ATP synthase or Complex V) that produces ATP from ADP in the presence of a proton gradient across the membrane which is generated by electron transport complexes of the respiratory chain. ATP synthase complex consist of a soluble F(1) head domain - the catalytic core - and a membrane F(1) domain - the membrane proton channel. These two domains are linked by a central stalk rotating inside the F(1) region and a stationary peripheral stalk. During catalysis, ATP synthesis in the catalytic domain of F(1) is coupled via a rotary mechanism of the central stalk subunits to proton translocation. With the subunit c (ATP5MC1), forms the proton-conducting channel in the F(0) domain, that contains two crucial half-channels (inlet and outlet) that facilitate proton movement from the mitochondrial intermembrane space (IMS) into the matrix. Protons are taken up via the inlet half-channel and released through the outlet half-channel, following a Grotthuss mechanism. This chain is ATP synthase F(0) complex subunit a, found in Ictidomys tridecemlineatus (Thirteen-lined ground squirrel).